A 98-amino-acid polypeptide reads, in one-letter code: Trp operon repressor homolog (98 aa).

The DNA-binding element occupies 59-82 (QRQVSQMLGVGVATITRGSNELKA).

The protein belongs to the TrpR family. In terms of assembly, homodimer.

The protein resides in the cytoplasm. This protein is an aporepressor. When complexed with L-tryptophan it binds the operator region of the trp operon and prevents the initiation of transcription. This is Trp operon repressor homolog from Vibrio atlanticus (strain LGP32) (Vibrio splendidus (strain Mel32)).